The chain runs to 230 residues: Sugar fermentation stimulation protein homolog (230 aa).

The protein belongs to the SfsA family.

The protein is Sugar fermentation stimulation protein homolog of Clostridium perfringens (strain SM101 / Type A).